The following is a 369-amino-acid chain: MEEKVEDDFLDLDAVPETPVFDCVMDIKPEADPTSLTVKSMGLQERRGSNVSLTLDMCTPGCNEEGFGYLVSPREESAHEYLLSASRVLRAEELHEKALDPFLLQAEFFEIPMNFVDPKEYDIPGLVRKNRYKTILPNPHSRVRLTSPDPEDPLSSYINANYIRGYNGEEKVYIATQGPIVSTVVDFWRMVWQERTPIIVMITNIEEMNEKCTEYWPEEQVVHDGVEITVQKVIHTEDYRLRLISLRRGTEERGLKHYWFTSWPDQKTPDRAPPLLHLVREVEEAAQQEGPHCSPIIVHCSAGIGRTGCFIATSICCQQLRREGVVDILKTTCQLRQDRGGMIQTCEQYQFVHHAMSLYEKQLSLQSSE.

Phosphoserine; by PKA is present on serine 49. Threonine 59 bears the Phosphothreonine; by MAPK mark. The residue at position 72 (serine 72) is a Phosphoserine; by MAPK. Positions leucine 104 to tyrosine 359 constitute a Tyrosine-protein phosphatase domain. Residues aspartate 265, cysteine 300–arginine 306, and glutamine 344 contribute to the substrate site. Residue cysteine 300 is the Phosphocysteine intermediate of the active site.

Belongs to the protein-tyrosine phosphatase family. Non-receptor class subfamily. Phosphorylation at Ser-49 by PKA deactivates PTPN5. Phosphorylation at Thr-59 and Ser-72 by MAPKs stabilizes the phosphatase, dephosphorylation of these sites results in ubiquitin-mediated degradation of the active phosphatase. In terms of tissue distribution, expressed in the central nervous system except in the cerebellum. Enriched within the striatum relative to other brain areas.

The protein resides in the cytoplasm. It catalyses the reaction O-phospho-L-tyrosyl-[protein] + H2O = L-tyrosyl-[protein] + phosphate. Its function is as follows. May regulate the activity of several effector molecules involved in synaptic plasticity and neuronal cell survival, including MAPKs, Src family kinases and NMDA receptors. This chain is Tyrosine-protein phosphatase non-receptor type 5 (Ptpn5), found in Rattus norvegicus (Rat).